The sequence spans 833 residues: Zinc phosphodiesterase ELAC protein 2 homolog (833 aa).

The N-terminal 19 residues, methionine 1 to histidine 19, are a transit peptide targeting the mitochondrion. A compositionally biased stretch (pro residues) spans leucine 624 to proline 646. The interval leucine 624–leucine 652 is disordered.

This sequence belongs to the RNase Z family. Homodimer. The cofactor is Zn(2+). As to expression, highly expressed in the germline.

The protein resides in the mitochondrion. It is found in the nucleus. It catalyses the reaction Endonucleolytic cleavage of RNA, removing extra 3' nucleotides from tRNA precursor, generating 3' termini of tRNAs. A 3'-hydroxy group is left at the tRNA terminus and a 5'-phosphoryl group is left at the trailer molecule.. Its function is as follows. Zinc phosphodiesterase, which displays some tRNA 3'-processing endonuclease activity. Probably involved in tRNA maturation, by removing a 3'-trailer from precursor tRNA. Involved in germline proliferation. May be required for both mitosis and meiosis in germ cells. In terms of biological role, does not regulate the mitochondrial unfolded protein response following mitochondrial stress. Functionally, plays a role in mitochondrial unfolded protein response. Upon mitochondrial stress is exported from the nucleus where its tRNA endonuclease activity is negatively regulated. In response to mitochondrial stress, might be involved in activating a transcriptional response in an ATFS-1- and DVE-1-dependent manner. May play a role in negatively regulating the mitochondrial membrane potential. In Caenorhabditis elegans, this protein is Zinc phosphodiesterase ELAC protein 2 homolog.